Reading from the N-terminus, the 939-residue chain is U3 small nucleolar RNA-associated protein 21 (939 aa).

At S2 the chain carries N-acetylserine. 14 WD repeats span residues 40 to 71, 81 to 111, 119 to 158, 168 to 201, 208 to 245, 252 to 287, 295 to 347, 354 to 388, 415 to 454, 463 to 497, 505 to 541, 546 to 581, 583 to 624, and 626 to 664; these read ATGT…LLFV, VALS…HLLE, EHLC…TKLT, VSLQ…LVFT, QITT…RTIK, SSLS…IHVL, YGGV…RSRG, SYIA…QSQE, VALA…GRWT, VKSV…LRKK, VTGI…GKLK, ITAM…VRQL, GHSN…DGII, and DNVA…KTVS. S772 is modified (phosphoserine).

Interacts with snoRNA U3. Interacts with MPP10. Interacts (via WD repeats) with UTP18. Component of the ribosomal small subunit (SSU) processome composed of at least 40 protein subunits and snoRNA U3.

The protein localises to the nucleus. The protein resides in the nucleolus. Involved in nucleolar processing of pre-18S ribosomal RNA and ribosome assembly. This chain is U3 small nucleolar RNA-associated protein 21 (UTP21), found in Saccharomyces cerevisiae (strain ATCC 204508 / S288c) (Baker's yeast).